We begin with the raw amino-acid sequence, 155 residues long: Protein-export protein SecB (155 aa).

This sequence belongs to the SecB family. As to quaternary structure, homotetramer, a dimer of dimers. One homotetramer interacts with 1 SecA dimer.

It is found in the cytoplasm. Functionally, one of the proteins required for the normal export of preproteins out of the cell cytoplasm. It is a molecular chaperone that binds to a subset of precursor proteins, maintaining them in a translocation-competent state. It also specifically binds to its receptor SecA. This Cronobacter sakazakii (strain ATCC BAA-894) (Enterobacter sakazakii) protein is Protein-export protein SecB.